A 264-amino-acid chain; its full sequence is Protein-lysine methyltransferase METTL21C (264 aa).

Residues 1-10 (MDVCLSSAQQ) show a composition bias toward polar residues. The disordered stretch occupies residues 1 to 46 (MDVCLSSAQQPGRRGEGLSSPGGWLEAEKKGAPQKDSTGGVLEESN). Residues tryptophan 92, 120–122 (GAG), aspartate 141, tryptophan 172, and serine 193 each bind S-adenosyl-L-methionine.

Belongs to the methyltransferase superfamily. METTL21 family. Interacts with members of the heat shock protein 70 families; these proteins may possibly be methylation substrates for the enzyme.

The protein resides in the nucleus. Its subcellular location is the cytoplasm. The catalysed reaction is L-lysyl-[protein] + S-adenosyl-L-methionine = N(6)-methyl-L-lysyl-[protein] + S-adenosyl-L-homocysteine + H(+). The enzyme catalyses N(6)-methyl-L-lysyl-[protein] + S-adenosyl-L-methionine = N(6),N(6)-dimethyl-L-lysyl-[protein] + S-adenosyl-L-homocysteine + H(+). It catalyses the reaction N(6),N(6)-dimethyl-L-lysyl-[protein] + S-adenosyl-L-methionine = N(6),N(6),N(6)-trimethyl-L-lysyl-[protein] + S-adenosyl-L-homocysteine + H(+). In terms of biological role, protein-lysine N-methyltransferase using S-adenosyl-L-methionine as methyl donor. Mono-di and trimethylates 'Lys-943' of AARS1. In Homo sapiens (Human), this protein is Protein-lysine methyltransferase METTL21C.